A 281-amino-acid polypeptide reads, in one-letter code: Feruloyl esterase A (281 aa).

A signal peptide spans 1-21 (MKQFSAKYALILLATAGQALA). 3 disulfides stabilise this stretch: C50–C279, C112–C115, and C248–C255. D98 contributes to the substrate binding site. A glycan (N-linked (GlcNAc...) asparagine) is linked at N100. Y101 contacts substrate. S154 serves as the catalytic Nucleophile. Residue D215 is the Charge relay system of the active site. H268 contributes to the substrate binding site. Catalysis depends on H268, which acts as the Charge relay system.

Post-translationally, glycosylated.

It localises to the secreted. It catalyses the reaction feruloyl-polysaccharide + H2O = ferulate + polysaccharide.. Inhibited by the specific serine esterase inhibitor diisopropylfluorophosphate. Involved in degradation of plant cell walls. Hydrolyzes the feruloyl-arabinose ester bond in arabinoxylans, and the feruloyl-galactose ester bond in pectin. Binds to cellulose. The chain is Feruloyl esterase A (faeA) from Aspergillus niger.